The primary structure comprises 424 residues: Subtilisin-like protease 2 (424 aa).

Positions 1 to 17 (MQLLNLGLLLLLPFVAG) are cleaved as a signal peptide. A propeptide spanning residues 18 to 123 (EIAPQPEPLR…VHPDQHVYLA (106 aa)) is cleaved from the precursor. The 87-residue stretch at 37 to 123 (QYIVTLKEGL…VHPDQHVYLA (87 aa)) folds into the Inhibitor I9 domain. Residues 132–424 (RWGLGYMSSK…RKFTLPKNTK (293 aa)) form the Peptidase S8 domain. Catalysis depends on charge relay system residues Asp170 and His202. N-linked (GlcNAc...) asparagine glycosylation is found at Asn249, Asn262, and Asn350. The Charge relay system role is filled by Ser359. A glycan (N-linked (GlcNAc...) asparagine) is linked at Asn390.

The protein belongs to the peptidase S8 family.

Its subcellular location is the secreted. In terms of biological role, secreted subtilisin-like serine protease with keratinolytic activity that contributes to pathogenicity. This Arthroderma otae (Microsporum canis) protein is Subtilisin-like protease 2 (SUB2).